Consider the following 423-residue polypeptide: Probable sucrose-phosphatase 3b (423 aa).

Belongs to the sucrose phosphatase family. As to quaternary structure, homodimer. Mg(2+) is required as a cofactor.

It catalyses the reaction sucrose 6(F)-phosphate + H2O = sucrose + phosphate. Its pathway is glycan biosynthesis; sucrose biosynthesis; sucrose from D-fructose 6-phosphate and UDP-alpha-D-glucose: step 2/2. In terms of biological role, catalyzes the final step of sucrose synthesis. In Arabidopsis thaliana (Mouse-ear cress), this protein is Probable sucrose-phosphatase 3b (SPP3B).